The primary structure comprises 205 residues: Protein phosphatase inhibitor 2 (205 aa).

Residues 1-44 form a disordered region; the sequence is MAASTASHRPIKGILKNKTSTTSSVVASAEQPRRTVEEELSKKS. Ala-2 bears the N-acetylalanine mark. A required for binding PPP1CC region spans residues 12-17; that stretch reads KGILKN. Residues 19–29 show a composition bias toward low complexity; the sequence is TSTTSSVVASA. Basic and acidic residues predominate over residues 31–44; the sequence is QPRRTVEEELSKKS. Residues 43–55 are required for binding PPP1CC; sequence KSQKWDEMNILAT. Ser-44 bears the Phosphoserine; by ATM mark. Thr-73 carries the phosphothreonine; by GSK3 modification. A phosphoserine mark is found at Ser-87 and Ser-89. Residues Thr-96 and Thr-116 each carry the phosphothreonine modification. Residues 104-142 are disordered; sequence LAAAEGSEPKFRTREQESSGEEDNDLSPEEREKKRQFEM. Over residues 110 to 120 the composition is skewed to basic and acidic residues; the sequence is SEPKFRTREQE. Residues Ser-121, Ser-122, and Ser-130 each carry the phosphoserine modification. Acidic residues predominate over residues 121-130; sequence SSGEEDNDLS. Over residues 131 to 142 the composition is skewed to basic and acidic residues; it reads PEEREKKRQFEM. The segment at 147–150 is required for binding PPP1CC catalytic center, displacing metal ions and inhibition of PPP1CC catalytic activity; that stretch reads HYNE. A disordered region spans residues 163–205; the sequence is KDLHDDDEDEEMSETADADSMNIEESNQGSTAGDHLQHKSQSS. Acidic residues predominate over residues 167–179; it reads DDDEDEEMSETAD.

The protein belongs to the protein phosphatase inhibitor 2 family. As to quaternary structure, heterodimer with PP1. Post-translationally, phosphorylation on Ser-44 by ATM activates PP1 by dissociating the PP1-PPP1R2 complex. Phosphorylation on Thr-73 by GSK3 activates PP1 by dissociating the PP1-PPP1R2 complex. Central nervous system.

Inhibitor of protein-phosphatase 1. The protein is Protein phosphatase inhibitor 2 (Ppp1r2) of Rattus norvegicus (Rat).